The sequence spans 219 residues: Adenylate kinase (219 aa).

An ATP-binding site is contributed by 10–15 (GAGKGT). The segment at 30–59 (STGDMLRVAVKVGTPLGIEAKKIMDSGGLV) is NMP. Residues Thr-31, Arg-36, 57–59 (GLV), 85–88 (GFPR), and Gln-92 each bind AMP. The interval 122 to 159 (GRRTHLKSGRTYHITYNQPKVEGIDDITGEKLVQRSDD) is LID. Residues Arg-123 and 132-133 (TY) contribute to the ATP site. The AMP site is built by Arg-156 and Arg-167. Gly-202 is an ATP binding site.

The protein belongs to the adenylate kinase family. As to quaternary structure, monomer.

The protein localises to the cytoplasm. It carries out the reaction AMP + ATP = 2 ADP. It functions in the pathway purine metabolism; AMP biosynthesis via salvage pathway; AMP from ADP: step 1/1. Its function is as follows. Catalyzes the reversible transfer of the terminal phosphate group between ATP and AMP. Plays an important role in cellular energy homeostasis and in adenine nucleotide metabolism. This is Adenylate kinase from Vesicomyosocius okutanii subsp. Calyptogena okutanii (strain HA).